The following is a 553-amino-acid chain: Putative transport protein PM1071 (553 aa).

A run of 5 helical transmembrane segments spans residues 4-24, 28-48, 65-85, 91-111, and 157-177; these read IAITISLLALVAVIGLWIGHW, GVGLGIGGVLFGGIIVAHFTN, FGLILFVYTIGIQVGPGFFAS, LKLNGFAALIVLLGSLAVIVI, and MAYAMAYPFGICGILLSMWLI. 2 RCK C-terminal domains span residues 190–276 and 277–361; these read KNFL…VLGE and EVDV…ILGN. Helical transmembrane passes span 371 to 391, 403 to 425, 439 to 459, 464 to 484, 496 to 516, and 533 to 553; these read MLPVFIGIGLGVLLGSIPFHI, AGGPLVVALILARIGSIGKLYWF, IVLFLAVVGLKSGGNFVDTLV, LEWMVYGIFITFVPLMIVGIV, LCGLLAGSMTDPPALAFANAI, and LVMFLRIISPQLLAILLWTLL.

The protein belongs to the AAE transporter (TC 2.A.81) family. YidE subfamily.

The protein localises to the cell membrane. This is Putative transport protein PM1071 from Pasteurella multocida (strain Pm70).